Reading from the N-terminus, the 599-residue chain is Aspartate--tRNA(Asp/Asn) ligase (599 aa).

Glu180 is a binding site for L-aspartate. Residues 204 to 207 (QLLK) are aspartate. Arg226 provides a ligand contact to L-aspartate. ATP-binding positions include 226–228 (RDE) and Gln235. An L-aspartate-binding site is contributed by His457. Glu491 is a binding site for ATP. L-aspartate is bound at residue Arg498. ATP is bound at residue 543 to 546 (GWDR). The interval 565–599 (KAGGGRDPLTGAPAPISDEQRAETGVDYDPDADEN) is disordered. Over residues 590–599 (VDYDPDADEN) the composition is skewed to acidic residues.

It belongs to the class-II aminoacyl-tRNA synthetase family. Type 1 subfamily. Homodimer.

Its subcellular location is the cytoplasm. The catalysed reaction is tRNA(Asx) + L-aspartate + ATP = L-aspartyl-tRNA(Asx) + AMP + diphosphate. Functionally, aspartyl-tRNA synthetase with relaxed tRNA specificity since it is able to aspartylate not only its cognate tRNA(Asp) but also tRNA(Asn). Reaction proceeds in two steps: L-aspartate is first activated by ATP to form Asp-AMP and then transferred to the acceptor end of tRNA(Asp/Asn). The polypeptide is Aspartate--tRNA(Asp/Asn) ligase (Bifidobacterium longum (strain NCC 2705)).